A 197-amino-acid chain; its full sequence is Pyridoxal 5'-phosphate synthase subunit PdxT (197 aa).

L-glutamine is bound at residue 50-52 (GES). Residue cysteine 82 is the Nucleophile of the active site. Residues arginine 111 and 140–141 (IR) contribute to the L-glutamine site. Catalysis depends on charge relay system residues histidine 176 and glutamate 178.

This sequence belongs to the glutaminase PdxT/SNO family. In terms of assembly, in the presence of PdxS, forms a dodecamer of heterodimers. Only shows activity in the heterodimer.

It carries out the reaction aldehydo-D-ribose 5-phosphate + D-glyceraldehyde 3-phosphate + L-glutamine = pyridoxal 5'-phosphate + L-glutamate + phosphate + 3 H2O + H(+). The catalysed reaction is L-glutamine + H2O = L-glutamate + NH4(+). Its pathway is cofactor biosynthesis; pyridoxal 5'-phosphate biosynthesis. Catalyzes the hydrolysis of glutamine to glutamate and ammonia as part of the biosynthesis of pyridoxal 5'-phosphate. The resulting ammonia molecule is channeled to the active site of PdxS. This Streptomyces griseus subsp. griseus (strain JCM 4626 / CBS 651.72 / NBRC 13350 / KCC S-0626 / ISP 5235) protein is Pyridoxal 5'-phosphate synthase subunit PdxT.